A 167-amino-acid chain; its full sequence is Peptidyl-prolyl cis-trans isomerase-like 3 (167 aa).

Residues 1–160 (MSVTLHTSHG…EPVRIENVTI (160 aa)) enclose the PPIase cyclophilin-type domain.

Belongs to the cyclophilin-type PPIase family. PPIL3 subfamily.

It catalyses the reaction [protein]-peptidylproline (omega=180) = [protein]-peptidylproline (omega=0). PPIases accelerate the folding of proteins. It catalyzes the cis-trans isomerization of proline imidic peptide bonds in oligopeptides. This Gibberella zeae (strain ATCC MYA-4620 / CBS 123657 / FGSC 9075 / NRRL 31084 / PH-1) (Wheat head blight fungus) protein is Peptidyl-prolyl cis-trans isomerase-like 3 (CYP10).